We begin with the raw amino-acid sequence, 136 residues long: Peptide methionine sulfoxide reductase MsrB (136 aa).

Positions Glu-13–Lys-135 constitute a MsrB domain. Residues Cys-52, Cys-55, Cys-101, and Cys-104 each contribute to the Zn(2+) site. Cys-124 serves as the catalytic Nucleophile.

Belongs to the MsrB Met sulfoxide reductase family. The cofactor is Zn(2+).

The enzyme catalyses L-methionyl-[protein] + [thioredoxin]-disulfide + H2O = L-methionyl-(R)-S-oxide-[protein] + [thioredoxin]-dithiol. In Synechococcus sp. (strain RCC307), this protein is Peptide methionine sulfoxide reductase MsrB.